Here is a 244-residue protein sequence, read N- to C-terminus: NAD(P)H-quinone oxidoreductase subunit K (244 aa).

[4Fe-4S] cluster is bound by residues C51, C52, C116, and C147.

The protein belongs to the complex I 20 kDa subunit family. NDH-1 can be composed of about 15 different subunits; different subcomplexes with different compositions have been identified which probably have different functions. Requires [4Fe-4S] cluster as cofactor.

It localises to the cellular thylakoid membrane. It carries out the reaction a plastoquinone + NADH + (n+1) H(+)(in) = a plastoquinol + NAD(+) + n H(+)(out). The catalysed reaction is a plastoquinone + NADPH + (n+1) H(+)(in) = a plastoquinol + NADP(+) + n H(+)(out). Its function is as follows. NDH-1 shuttles electrons from an unknown electron donor, via FMN and iron-sulfur (Fe-S) centers, to quinones in the respiratory and/or the photosynthetic chain. The immediate electron acceptor for the enzyme in this species is believed to be plastoquinone. Couples the redox reaction to proton translocation, and thus conserves the redox energy in a proton gradient. Cyanobacterial NDH-1 also plays a role in inorganic carbon-concentration. This Synechococcus sp. (strain JA-3-3Ab) (Cyanobacteria bacterium Yellowstone A-Prime) protein is NAD(P)H-quinone oxidoreductase subunit K.